We begin with the raw amino-acid sequence, 1035 residues long: Integrin alpha-9 (1035 aa).

The N-terminal stretch at 1-29 (MGGPAAPRGAGRLRALLLALVVAGIPAGA) is a signal peptide. Residues 30 to 981 (YNLDPQRPVH…LEPRGYVVGW (952 aa)) lie on the Extracellular side of the membrane. FG-GAP repeat units follow at residues 35 to 96 (QRPV…PDRR), 111 to 174 (SCGK…AKGR), 182 to 232 (EYKK…NTYL), 233 to 289 (KLND…SGTL), 290 to 349 (IKIF…GALE), 351 to 408 (QLAL…GIVP), and 411 to 474 (SMKL…LPGS). Cystine bridges form between C87-C97, C142-C162, and C179-C194. An N-linked (GlcNAc...) asparagine glycan is attached at N225. Positions 312, 314, 316, 320, 373, 375, 377, 381, 435, 437, 439, and 443 each coordinate Ca(2+). N476 is a glycosylation site (N-linked (GlcNAc...) asparagine). A disulfide bond links C482 and C491. A glycan (N-linked (GlcNAc...) asparagine) is linked at N493. A disulfide bond links C497 and C555. The N-linked (GlcNAc...) asparagine glycan is linked to N612. A disulfide bond links C620 and C625. N-linked (GlcNAc...) asparagine glycosylation is found at N654, N658, N672, and N676. A disulfide bridge connects residues C696 and C706. N-linked (GlcNAc...) asparagine glycosylation is found at N807 and N854. 2 disulfide bridges follow: C855–C891 and C898–C903. A glycan (N-linked (GlcNAc...) asparagine) is linked at N904. A helical membrane pass occupies residues 982 to 1002 (IIAISLLVGILIFLLLAVLLW). Topologically, residues 1003-1035 (KMGFFRRRYKEIIEAEKNRKENEDSWDWVQKNQ) are cytoplasmic. The short motif at 1005-1009 (GFFRR) is the GFFKR motif element.

The protein belongs to the integrin alpha chain family. In terms of assembly, heterodimer of an alpha and a beta subunit. Alpha-9 (ITGA9) associates with beta-1 (ITGB1). Integrin ITGA9:ITGB1 interacts with FBLN5 (via N-terminus). Integrin ITGA9:ITGB1 interacts with SPP1/OPN (via N-terminus). Integrin ITGA9:ITGB1 interacts with TNC/TNFN3 (via the 3rd Fibronectin type-III domain). Integrin ITGA9:ITGB1 interacts with SVEP1/polydom (via Sushi domain 21); thereby inhibits Ca(2+) intracellular signaling and as a result represses vasocontraction. In terms of tissue distribution, expressed in vascular smooth muscle cells (at protein level). Expressed in the airway epithelium (at protein level).

The protein resides in the membrane. In terms of biological role, integrin alpha-9/beta-1 (ITGA9:ITGB1) is a receptor for VCAM1, cytotactin and osteopontin. It recognizes the sequence A-E-I-D-G-I-E-L in cytotactin. ITGA9:ITGB1 may play a crucial role in SVEP1/polydom-mediated myoblast cell adhesion. Integrin ITGA9:ITGB1 represses PRKCA-mediated L-type voltage-gated channel Ca(2+) influx and ROCK-mediated calcium sensitivity in vascular smooth muscle cells via its interaction with SVEP1, thereby inhibiting vasocontraction. The polypeptide is Integrin alpha-9 (ITGA9) (Homo sapiens (Human)).